A 65-amino-acid chain; its full sequence is Large ribosomal subunit protein bL35 (65 aa).

The protein belongs to the bacterial ribosomal protein bL35 family.

The polypeptide is Large ribosomal subunit protein bL35 (Chlorobium phaeovibrioides (strain DSM 265 / 1930) (Prosthecochloris vibrioformis (strain DSM 265))).